Reading from the N-terminus, the 353-residue chain is MTNHTITTAERELYLALIQRAQYRPIATQWLANLPQWLSDVKDKRRYAHAPAYLSAVENLPQIKVKNVDLNSDILTIDADLTDGQSKQITALMKQLMPWRKGPFQIGSGDNKVFIDTEWHSDWKWNRIKPHLGTLQGRYVLDVGGGSGYHGWRMAGAGAKQVVIIDPSCLFYHQFMAIRHFVAGFDTDMDSDRTGVGYRTHYIPVGLEQLPSSSDQGNQLFDTVFCMGVLYHRQSPFEHLIQLKNQLINGGQLVLETLVIEGDANTVLVPHNRYAKMNNVYFIPSVAALTGWLEKVGFSEVKCVDIDITSIKEQRATDWMSYQSLKDFLDPNDPTKTVEGYPAPMRATLIATK.

Carboxy-S-adenosyl-L-methionine contacts are provided by residues lysine 101, tryptophan 119, lysine 124, glycine 144, 166 to 168, 207 to 208, methionine 227, tyrosine 231, and arginine 346; these read DPS and LE.

This sequence belongs to the class I-like SAM-binding methyltransferase superfamily. CmoB family. Homotetramer.

The enzyme catalyses carboxy-S-adenosyl-L-methionine + 5-hydroxyuridine(34) in tRNA = 5-carboxymethoxyuridine(34) in tRNA + S-adenosyl-L-homocysteine + H(+). Its function is as follows. Catalyzes carboxymethyl transfer from carboxy-S-adenosyl-L-methionine (Cx-SAM) to 5-hydroxyuridine (ho5U) to form 5-carboxymethoxyuridine (cmo5U) at position 34 in tRNAs. This Psychrobacter sp. (strain PRwf-1) protein is tRNA U34 carboxymethyltransferase.